Here is a 302-residue protein sequence, read N- to C-terminus: Sulfate adenylyltransferase subunit 2 (302 aa).

The segment at 280-302 (RQGRLIDSDQSASMEQKKRQGYF) is disordered.

It belongs to the PAPS reductase family. CysD subfamily. Heterodimer composed of CysD, the smaller subunit, and CysN.

The catalysed reaction is sulfate + ATP + H(+) = adenosine 5'-phosphosulfate + diphosphate. The protein operates within sulfur metabolism; hydrogen sulfide biosynthesis; sulfite from sulfate: step 1/3. In terms of biological role, with CysN forms the ATP sulfurylase (ATPS) that catalyzes the adenylation of sulfate producing adenosine 5'-phosphosulfate (APS) and diphosphate, the first enzymatic step in sulfur assimilation pathway. APS synthesis involves the formation of a high-energy phosphoric-sulfuric acid anhydride bond driven by GTP hydrolysis by CysN coupled to ATP hydrolysis by CysD. The polypeptide is Sulfate adenylyltransferase subunit 2 (Shewanella sp. (strain ANA-3)).